The chain runs to 159 residues: Aspartate carbamoyltransferase regulatory chain (159 aa).

Cys-113, Cys-118, Cys-142, and Cys-145 together coordinate Zn(2+).

Belongs to the PyrI family. As to quaternary structure, contains catalytic and regulatory chains. The cofactor is Zn(2+).

In terms of biological role, involved in allosteric regulation of aspartate carbamoyltransferase. The chain is Aspartate carbamoyltransferase regulatory chain from Saccharolobus islandicus (strain Y.N.15.51 / Yellowstone #2) (Sulfolobus islandicus).